We begin with the raw amino-acid sequence, 141 residues long: MEIRVFRQEDFEEVITLWERCDLLRPWNDPEMDIERKMNHDVSLFLVAEVNGDVVGTVMGGYDGHRGSAYYLGVHPEFRGRGIANALLNRLEKKLIARGCPKIQINVPEDNDMVLGMYERLGYEHADVLSLGKRLIEDEEY.

In terms of domain architecture, N-acetyltransferase spans 1 to 141 (MEIRVFRQED…GKRLIEDEEY (141 aa)).

It belongs to the acetyltransferase family. YpeA subfamily.

This is Acetyltransferase YpeA (ypeA) from Escherichia coli (strain K12).